The primary structure comprises 255 residues: Homeobox protein DLX-1 (255 aa).

Positions 1 to 14 (MTMTTMPESLNSPV) are enriched in polar residues. 2 disordered regions span residues 1–38 (MTMT…MSHG) and 95–118 (SLAQ…EGGE). Residues 25–36 (PPNQQMSPSPMS) show a composition bias toward low complexity. The segment covering 100–112 (RLEDPGADSEKST) has biased composition (basic and acidic residues). The homeobox DNA-binding region spans 128 to 187 (IRKPRTIYSSLQLQALNRRFQQTQYLALPERAELAASLGLTQTQVKIWFQNKRSKFKKLM). Residues 204–233 (ALSAGSPPVPPGWNPNSSSGKGSGSSAGSY) form a disordered region. Positions 217-232 (NPNSSSGKGSGSSAGS) are enriched in low complexity.

Belongs to the distal-less homeobox family. Interacts with SMAD4 (via homeobox DNA-binding domain). Interacts (via homeobox DNA-binding domain) with POU4F2; this interaction suppresses DLX1-mediated transcriptional activity in postnatal retina and enhances retinal ganglion cell (RGC) differentiation. In terms of tissue distribution, expressed in a restricted region of the developing brain, within the diencephalon and the adjacent telencephalic regions.

The protein resides in the nucleus. Functionally, plays a role as a transcriptional activator or repressor. Inhibits several cytokine signaling pathways, such as TGFB1, activin-A/INHBA and BMP4 by interfering with the transcriptional stimulatory activity of transcription factors, such as MSX2, FAST2, SMAD2 and SMAD3 during hematopoietic cell differentiation. Plays a role in terminal differentiation of interneurons, such as amacrine and bipolar cells in the developing retina. Likely to play a regulatory role in the development of the ventral forebrain. May play a role in craniofacial patterning and morphogenesis and may be involved in the early development of diencephalic subdivisions. This is Homeobox protein DLX-1 (Dlx1) from Mus musculus (Mouse).